The sequence spans 535 residues: MNTSQDVNAEAANERSALLPRFLGSHRGNVPENTDTYALTPLFYWIRSTSVGLLLITIICHLFLLLNIFISIPIISHLSPGFMPVGFTALAAILLAMQIMFVYSPNAPERVTQRIICFLLAIDVLVVFLSPILRHREGWRSNAFVLWAFLMSLWIVITDLMLFRQYKEEHPDYDAIAHRGYYWSWSPSTWPWRQVGSLTASTILSVILTILTIHTLVTLIMRAYDGALSAPGQLYTVTDSKARVHLECFGSSSSNNKTTVLVEGGEVSVHPFKEWLLNLQHTSPDLYEESKDFEGYENDVKPYLSPDTRVCVWDRPGMGWSDNIGSPSSVGIVMDLLTEALAQADVSGPYVLVAHGIGGVYSNVFAARHLSEVKGIVFVDAGSVQTLKDSGQFLSRFLLFVRGWLSPLGINRIFGSIFMGKTRQDRVYGMYSWTSDRWVKSKIEESLTGPSFSRYELQSAQSVLPKDLPVSVISAGKSMKRFKKWPDEQRQLSKLTQRTVWDIVNNAPHDVWLSDDGGDLIMKRLGEIIYGGWPN.

Transmembrane regions (helical) follow at residues 55-75 (LITI…IPII), 82-102 (FMPV…IMFV), 115-135 (IICF…ILRH), 143-163 (AFVL…LMLF), 201-221 (STIL…TLIM), and 346-366 (VSGP…NVFA).

The protein localises to the membrane. This is an uncharacterized protein from Schizosaccharomyces pombe (strain 972 / ATCC 24843) (Fission yeast).